Reading from the N-terminus, the 598-residue chain is MEQKNIRNFSIIAHIDHGKSTLSDRLLEHSLGFEKRLLQAQMLDTMEIERERGITIKLNAVELKINVDNNNYLFHLIDTPGHVDFTYEVSRSLAACEGVLLLVDATQGIQAQTISNAYLALENNLEIIPVINKIDMDNADIETTKDSLHNLLGVEKNSICLVSAKANLGIDQLIQTIIAKIPPPKGEINRPLKALLFDSYYDPYKGVVCFIRVFDGCLKVNDKVRFIKSNSVYQIVELGVKTPFFEKRDQLQAGDVGWFSAGIKKLRDVGVGDTIVSFDDQFTKPLAGYKKILPMIYCGLYPVDNSDYQNLKLAMEKIIISDAALEYEYETSQALGFGVRCGFLGLLHMDVIKERLEREYNLKLISAPPSVVYKVLLTNGKEISIDNPSLLPERSKIKAISEPFVKVFIDLPDQYLGSVIDLCQNFRGQYESLNEIDINRKRICYLMPLGEIIYSFFDKLKSISKGYASLNYEFYNYQHSQLEKVEIMLNKQKIDALSFISHKDFAFKRAKKFCTKLKELIPKHLFEIPIQATIGSKVIARETIKAVRKDVIAKLYGGDVSRKKKLLEKQKEGKKRLKAVGSVQLPQELFSHLLKDED.

The 182-residue stretch at 4 to 185 folds into the tr-type G domain; the sequence is KNIRNFSIIA…TIIAKIPPPK (182 aa). Residues 16 to 21 and 132 to 135 contribute to the GTP site; these read DHGKST and NKID.

It belongs to the TRAFAC class translation factor GTPase superfamily. Classic translation factor GTPase family. LepA subfamily.

The protein resides in the cell membrane. The enzyme catalyses GTP + H2O = GDP + phosphate + H(+). In terms of biological role, required for accurate and efficient protein synthesis under certain stress conditions. May act as a fidelity factor of the translation reaction, by catalyzing a one-codon backward translocation of tRNAs on improperly translocated ribosomes. Back-translocation proceeds from a post-translocation (POST) complex to a pre-translocation (PRE) complex, thus giving elongation factor G a second chance to translocate the tRNAs correctly. Binds to ribosomes in a GTP-dependent manner. The chain is Elongation factor 4 from Mycoplasma genitalium (strain ATCC 33530 / DSM 19775 / NCTC 10195 / G37) (Mycoplasmoides genitalium).